Reading from the N-terminus, the 644-residue chain is 1-deoxy-D-xylulose-5-phosphate synthase (644 aa).

Thiamine diphosphate contacts are provided by residues His-78 and 120–122 (GHA). Asp-149 lines the Mg(2+) pocket. Thiamine diphosphate contacts are provided by residues 150-151 (AA), Asn-178, and Glu-373. Asn-178 provides a ligand contact to Mg(2+).

The protein belongs to the transketolase family. DXPS subfamily. As to quaternary structure, homodimer. Mg(2+) serves as cofactor. The cofactor is thiamine diphosphate.

It carries out the reaction D-glyceraldehyde 3-phosphate + pyruvate + H(+) = 1-deoxy-D-xylulose 5-phosphate + CO2. It participates in metabolic intermediate biosynthesis; 1-deoxy-D-xylulose 5-phosphate biosynthesis; 1-deoxy-D-xylulose 5-phosphate from D-glyceraldehyde 3-phosphate and pyruvate: step 1/1. Functionally, catalyzes the acyloin condensation reaction between C atoms 2 and 3 of pyruvate and glyceraldehyde 3-phosphate to yield 1-deoxy-D-xylulose-5-phosphate (DXP). The chain is 1-deoxy-D-xylulose-5-phosphate synthase from Chlamydia caviae (strain ATCC VR-813 / DSM 19441 / 03DC25 / GPIC) (Chlamydophila caviae).